The primary structure comprises 115 residues: Large ribosomal subunit protein bL20 (115 aa).

This sequence belongs to the bacterial ribosomal protein bL20 family.

Binds directly to 23S ribosomal RNA and is necessary for the in vitro assembly process of the 50S ribosomal subunit. It is not involved in the protein synthesizing functions of that subunit. The sequence is that of Large ribosomal subunit protein bL20 from Microcystis aeruginosa (strain NIES-843 / IAM M-2473).